The primary structure comprises 333 residues: Probable tRNA pseudouridine synthase B (333 aa).

The active-site Nucleophile is the Asp-66. The PUA domain occupies 233–308 (LKKIIIKDSA…EVVEITRVIM (76 aa)).

Belongs to the pseudouridine synthase TruB family. Type 2 subfamily.

It catalyses the reaction uridine(55) in tRNA = pseudouridine(55) in tRNA. Its function is as follows. Could be responsible for synthesis of pseudouridine from uracil-55 in the psi GC loop of transfer RNAs. The chain is Probable tRNA pseudouridine synthase B from Methanococcus maripaludis (strain DSM 14266 / JCM 13030 / NBRC 101832 / S2 / LL).